The sequence spans 637 residues: 1-deoxy-D-xylulose-5-phosphate synthase (637 aa).

Residues His-71 and 112 to 114 (SHA) contribute to the thiamine diphosphate site. Residue Asp-144 coordinates Mg(2+). Thiamine diphosphate contacts are provided by residues 145 to 146 (GA), Asn-173, Tyr-284, and Glu-365. Residue Asn-173 participates in Mg(2+) binding.

It belongs to the transketolase family. DXPS subfamily. Homodimer. It depends on Mg(2+) as a cofactor. The cofactor is thiamine diphosphate.

It catalyses the reaction D-glyceraldehyde 3-phosphate + pyruvate + H(+) = 1-deoxy-D-xylulose 5-phosphate + CO2. It functions in the pathway metabolic intermediate biosynthesis; 1-deoxy-D-xylulose 5-phosphate biosynthesis; 1-deoxy-D-xylulose 5-phosphate from D-glyceraldehyde 3-phosphate and pyruvate: step 1/1. In terms of biological role, catalyzes the acyloin condensation reaction between C atoms 2 and 3 of pyruvate and glyceraldehyde 3-phosphate to yield 1-deoxy-D-xylulose-5-phosphate (DXP). This is 1-deoxy-D-xylulose-5-phosphate synthase from Mycolicibacterium vanbaalenii (strain DSM 7251 / JCM 13017 / BCRC 16820 / KCTC 9966 / NRRL B-24157 / PYR-1) (Mycobacterium vanbaalenii).